Here is a 236-residue protein sequence, read N- to C-terminus: Class B acid phosphatase (236 aa).

The first 22 residues, 1 to 22 (MKNVMKLSVIALLTAAAVPAMA), serve as a signal peptide directing secretion. Asp67 (nucleophile) is an active-site residue. The Mg(2+) site is built by Asp67 and Asp69. Asp69 serves as the catalytic Proton donor. Substrate is bound by residues 136 to 137 (TG) and Lys176. Residue Asp191 coordinates Mg(2+).

This sequence belongs to the class B bacterial acid phosphatase family. In terms of assembly, homotetramer. It depends on Mg(2+) as a cofactor.

It localises to the periplasm. It carries out the reaction a phosphate monoester + H2O = an alcohol + phosphate. Functionally, dephosphorylates several organic phosphate monoesters. Also has a phosphotransferase activity catalyzing the transfer of low-energy phosphate groups from organic phosphate monoesters to free hydroxyl groups of various organic compounds. This Haemophilus influenzae (strain ATCC 51907 / DSM 11121 / KW20 / Rd) protein is Class B acid phosphatase (aphA).